Consider the following 1188-residue polypeptide: Major DNA-binding protein (1188 aa).

The Required for filament formation signature appears at F838–W839. Residues C1145 to S1175 form a disordered region. Residues D1166–C1188 are required for nuclear localization.

The protein belongs to the herpesviridae major DNA-binding protein family. As to quaternary structure, homooligomers. Forms double-helical filaments necessary for the formation of replication compartments within the host nucleus. Interacts with the origin-binding protein. Interacts with the helicase primase complex; this interaction stimulates primer synthesis activity of the helicase-primase complex. Interacts with the DNA polymerase. Interacts with the alkaline exonuclease; this interaction increases its nuclease processivity.

It localises to the host nucleus. Plays several crucial roles in viral infection. Participates in the opening of the viral DNA origin to initiate replication by interacting with the origin-binding protein. May disrupt loops, hairpins and other secondary structures present on ssDNA to reduce and eliminate pausing of viral DNA polymerase at specific sites during elongation. Promotes viral DNA recombination by performing strand-transfer, characterized by the ability to transfer a DNA strand from a linear duplex to a complementary single-stranded DNA circle. Can also catalyze the renaturation of complementary single strands. Additionally, reorganizes the host cell nucleus, leading to the formation of prereplicative sites and replication compartments. This process is driven by the protein which can form double-helical filaments in the absence of DNA. This Amazona oratrix (yellow-headed parrot) protein is Major DNA-binding protein.